Here is a 236-residue protein sequence, read N- to C-terminus: Purine nucleoside phosphorylase CA_C1699 (236 aa).

Zn(2+) is bound by residues His-62, Cys-97, and His-114.

The protein belongs to the purine nucleoside phosphorylase YfiH/LACC1 family. Homodimer. The cofactor is Cu(2+). Requires Zn(2+) as cofactor.

It catalyses the reaction adenosine + phosphate = alpha-D-ribose 1-phosphate + adenine. The enzyme catalyses S-methyl-5'-thioadenosine + phosphate = 5-(methylsulfanyl)-alpha-D-ribose 1-phosphate + adenine. It carries out the reaction inosine + phosphate = alpha-D-ribose 1-phosphate + hypoxanthine. The catalysed reaction is adenosine + H2O + H(+) = inosine + NH4(+). Purine nucleoside enzyme that catalyzes the phosphorolysis of adenosine and inosine nucleosides, yielding D-ribose 1-phosphate and the respective free bases, adenine and hypoxanthine. Also catalyzes the phosphorolysis of S-methyl-5'-thioadenosine into adenine and S-methyl-5-thio-alpha-D-ribose 1-phosphate. Also has adenosine deaminase activity. The chain is Purine nucleoside phosphorylase CA_C1699 from Clostridium acetobutylicum (strain ATCC 824 / DSM 792 / JCM 1419 / IAM 19013 / LMG 5710 / NBRC 13948 / NRRL B-527 / VKM B-1787 / 2291 / W).